A 314-amino-acid chain; its full sequence is Nodulation protein D 1 (314 aa).

The region spanning 6–63 (LDLNLLVALDAVMTARNLTAAARKINLSQPAMSAAIARLRTYFRDELFTMRGRELVPT) is the HTH lysR-type domain. The H-T-H motif DNA-binding region spans 23 to 42 (LTAAARKINLSQPAMSAAIA).

Belongs to the LysR transcriptional regulatory family.

Functionally, nodD regulates the expression of the nodABCFE genes which encode other nodulation proteins. NodD is also a negative regulator of its own expression. Binds flavonoids as inducers. The chain is Nodulation protein D 1 (nodD1) from Bradyrhizobium diazoefficiens (strain JCM 10833 / BCRC 13528 / IAM 13628 / NBRC 14792 / USDA 110).